A 252-amino-acid chain; its full sequence is 4-hydroxy-tetrahydrodipicolinate reductase (252 aa).

Residues 8-13, 85-87, and 109-112 contribute to the NAD(+) site; these read GCSGKM, CTT, and SANM. His142 functions as the Proton donor/acceptor in the catalytic mechanism. His143 is a binding site for (S)-2,3,4,5-tetrahydrodipicolinate. The active-site Proton donor is the Lys146. Residue 152–153 coordinates (S)-2,3,4,5-tetrahydrodipicolinate; the sequence is GT.

Belongs to the DapB family.

The protein resides in the cytoplasm. The catalysed reaction is (S)-2,3,4,5-tetrahydrodipicolinate + NAD(+) + H2O = (2S,4S)-4-hydroxy-2,3,4,5-tetrahydrodipicolinate + NADH + H(+). The enzyme catalyses (S)-2,3,4,5-tetrahydrodipicolinate + NADP(+) + H2O = (2S,4S)-4-hydroxy-2,3,4,5-tetrahydrodipicolinate + NADPH + H(+). It functions in the pathway amino-acid biosynthesis; L-lysine biosynthesis via DAP pathway; (S)-tetrahydrodipicolinate from L-aspartate: step 4/4. Functionally, catalyzes the conversion of 4-hydroxy-tetrahydrodipicolinate (HTPA) to tetrahydrodipicolinate. The sequence is that of 4-hydroxy-tetrahydrodipicolinate reductase from Clostridium novyi (strain NT).